A 354-amino-acid chain; its full sequence is Peptide chain release factor 1 (354 aa).

At Gln-232 the chain carries N5-methylglutamine.

It belongs to the prokaryotic/mitochondrial release factor family. Methylated by PrmC. Methylation increases the termination efficiency of RF1.

The protein localises to the cytoplasm. In terms of biological role, peptide chain release factor 1 directs the termination of translation in response to the peptide chain termination codons UAG and UAA. This is Peptide chain release factor 1 from Phytoplasma australiense.